A 349-amino-acid chain; its full sequence is sn-glycerol-3-phosphate import ATP-binding protein UgpC (349 aa).

The ABC transporter domain occupies 4 to 234 (ISLRDVRKSY…PATTFVAGFI (231 aa)). Residue 36 to 43 (GPSGCGKS) participates in ATP binding.

It belongs to the ABC transporter superfamily. sn-glycerol-3-phosphate importer (TC 3.A.1.1.3) family. As to quaternary structure, the complex is composed of two ATP-binding proteins (UgpC), two transmembrane proteins (UgpA and UgpE) and a solute-binding protein (UgpB).

It localises to the cell inner membrane. The enzyme catalyses sn-glycerol 3-phosphate(out) + ATP + H2O = sn-glycerol 3-phosphate(in) + ADP + phosphate + H(+). In terms of biological role, part of the ABC transporter complex UgpBAEC involved in sn-glycerol-3-phosphate (G3P) import. Responsible for energy coupling to the transport system. The chain is sn-glycerol-3-phosphate import ATP-binding protein UgpC from Cereibacter sphaeroides (strain ATCC 17023 / DSM 158 / JCM 6121 / CCUG 31486 / LMG 2827 / NBRC 12203 / NCIMB 8253 / ATH 2.4.1.) (Rhodobacter sphaeroides).